The sequence spans 116 residues: NADH-ubiquinone oxidoreductase chain 3 (116 aa).

3 helical membrane passes run 3 to 23 (LILAGLLIMSILSMILAMIAF), 56 to 76 (FFLVAILFLLFDLEIALLLPL), and 85 to 105 (PTLALTWTTSIIALLTLGLIH).

Belongs to the complex I subunit 3 family.

The protein resides in the mitochondrion membrane. It catalyses the reaction a ubiquinone + NADH + 5 H(+)(in) = a ubiquinol + NAD(+) + 4 H(+)(out). Functionally, core subunit of the mitochondrial membrane respiratory chain NADH dehydrogenase (Complex I) that is believed to belong to the minimal assembly required for catalysis. Complex I functions in the transfer of electrons from NADH to the respiratory chain. The immediate electron acceptor for the enzyme is believed to be ubiquinone. In Latimeria chalumnae (Coelacanth), this protein is NADH-ubiquinone oxidoreductase chain 3 (MT-ND3).